Reading from the N-terminus, the 356-residue chain is MQTLHALFRDIPAPDAEAMARAQQHIDGLLKPPGSLGRLETLAVQLAGMPGLNGTPQVGEKAVLVMCADHGVWDEGVAVSPKIVTAIQAANMTQGTTGVCVLAAQAGAKVHVIDVGIDAEPIPGVVDMRVARGCGNIAVGPAMSRSQAEALLLEVSRYTCDLAKRGVTLFGVGELGMANTTPAAAMVSVFTGSDAKEVVGIGANLPPSRIDNKVDVVRRAIAINQPNPRDGIDVLSKVGGFDLVGMTGVMLGAARCGLPVLLDGFLSYSAALAACQIAPAVRPYLIPSHFSAEKGARIALAHLSMEPYLHMAMRLGEGSGAALAMPIVEAACAMFHNMGELAASNIVLPEGNANAT.

Glu317 functions as the Proton acceptor in the catalytic mechanism.

It belongs to the CobT family. As to quaternary structure, homodimer.

The enzyme catalyses 5,6-dimethylbenzimidazole + nicotinate beta-D-ribonucleotide = alpha-ribazole 5'-phosphate + nicotinate + H(+). It functions in the pathway nucleoside biosynthesis; alpha-ribazole biosynthesis; alpha-ribazole from 5,6-dimethylbenzimidazole: step 1/2. In terms of biological role, catalyzes the synthesis of alpha-ribazole-5'-phosphate from nicotinate mononucleotide (NAMN) and 5,6-dimethylbenzimidazole (DMB). The protein is Nicotinate-nucleotide--dimethylbenzimidazole phosphoribosyltransferase of Salmonella typhi.